Consider the following 174-residue polypeptide: Probable calcium-binding protein CML20 (174 aa).

Gly-2 carries the N-myristoyl glycine lipid modification. Residues 14-35 form a disordered region; it reads LRRSRSRSPPPAVLDPSQSPLS. EF-hand domains are found at residues 39 to 74, 75 to 100, 102 to 137, and 141 to 174; these read EAEPELIRVFRCFDTDGDGLISAAEMREFYGCSVDE, AEEMVAAADRDGDGFVSIEELRAVME, GGLDALRAAFDEYDEDGNGVITAEELRRALRRLNLD, and LTAEQCAEIVAAVDSDGDGVISFDEFKAMMSKQA. Ca(2+)-binding residues include Asp-52, Asp-54, Asp-56, Glu-63, Asp-83, Asp-85, Asp-87, Glu-94, Asp-115, Asp-117, Asn-119, Glu-126, Asp-154, Asp-156, Asp-158, and Glu-165.

Potential calcium sensor. The polypeptide is Probable calcium-binding protein CML20 (CML20) (Oryza sativa subsp. japonica (Rice)).